Reading from the N-terminus, the 382-residue chain is Protein RecA (382 aa).

Residues 1–20 (MPADVKAAQSSAGDSRPGER) are disordered. 79 to 86 (GPESSGKT) serves as a coordination point for ATP. Low complexity predominate over residues 360-369 (SAAAKPSAKT). The tract at residues 360–382 (SAAAKPSAKTADTDKKLVADGAA) is disordered. The span at 370–382 (ADTDKKLVADGAA) shows a compositional bias: basic and acidic residues.

It belongs to the RecA family.

It is found in the cytoplasm. Can catalyze the hydrolysis of ATP in the presence of single-stranded DNA, the ATP-dependent uptake of single-stranded DNA by duplex DNA, and the ATP-dependent hybridization of homologous single-stranded DNAs. It interacts with LexA causing its activation and leading to its autocatalytic cleavage. The chain is Protein RecA from Synechococcus sp. (strain CC9311).